A 332-amino-acid polypeptide reads, in one-letter code: ATPase GET3 (332 aa).

Residue 32–39 participates in ATP binding; the sequence is KGGVGKTT. Asp-61 is an active-site residue. The ATP site is built by Glu-235 and Asn-262. Cys-273 and Cys-276 together coordinate Zn(2+).

This sequence belongs to the arsA ATPase family. As to quaternary structure, homodimer.

The protein localises to the cytoplasm. It localises to the endoplasmic reticulum. ATPase required for the post-translational delivery of tail-anchored (TA) proteins to the endoplasmic reticulum. Recognizes and selectively binds the transmembrane domain of TA proteins in the cytosol. This complex then targets to the endoplasmic reticulum by membrane-bound receptors, where the tail-anchored protein is released for insertion. This process is regulated by ATP binding and hydrolysis. ATP binding drives the homodimer towards the closed dimer state, facilitating recognition of newly synthesized TA membrane proteins. ATP hydrolysis is required for insertion. Subsequently, the homodimer reverts towards the open dimer state, lowering its affinity for the membrane-bound receptor, and returning it to the cytosol to initiate a new round of targeting. In Mycosarcoma maydis (Corn smut fungus), this protein is ATPase GET3.